Consider the following 113-residue polypeptide: Cell cycle protein GpsB (113 aa).

The stretch at L36–P68 forms a coiled coil.

Belongs to the GpsB family. In terms of assembly, forms polymers through the coiled coil domains. Interacts with PBP1, MreC and EzrA.

The protein resides in the cytoplasm. Divisome component that associates with the complex late in its assembly, after the Z-ring is formed, and is dependent on DivIC and PBP2B for its recruitment to the divisome. Together with EzrA, is a key component of the system that regulates PBP1 localization during cell cycle progression. Its main role could be the removal of PBP1 from the cell pole after pole maturation is completed. Also contributes to the recruitment of PBP1 to the division complex. Not essential for septum formation. This is Cell cycle protein GpsB from Listeria welshimeri serovar 6b (strain ATCC 35897 / DSM 20650 / CCUG 15529 / CIP 8149 / NCTC 11857 / SLCC 5334 / V8).